Here is a 447-residue protein sequence, read N- to C-terminus: Ribosomal protein uS12 methylthiotransferase RimO (447 aa).

An MTTase N-terminal domain is found at 4-114 (PKVGFVSLGC…VMEAVHEYVP (111 aa)). Residues Cys13, Cys49, Cys78, Cys147, Cys151, and Cys154 each contribute to the [4Fe-4S] cluster site. Positions 133–370 (LTPKHYAYLK…MQVQQQISAA (238 aa)) constitute a Radical SAM core domain. The region spanning 373-443 (QKRIGQTMTV…EYDLFAKLIK (71 aa)) is the TRAM domain.

This sequence belongs to the methylthiotransferase family. RimO subfamily. It depends on [4Fe-4S] cluster as a cofactor.

The protein resides in the cytoplasm. It carries out the reaction L-aspartate(89)-[ribosomal protein uS12]-hydrogen + (sulfur carrier)-SH + AH2 + 2 S-adenosyl-L-methionine = 3-methylsulfanyl-L-aspartate(89)-[ribosomal protein uS12]-hydrogen + (sulfur carrier)-H + 5'-deoxyadenosine + L-methionine + A + S-adenosyl-L-homocysteine + 2 H(+). Its function is as follows. Catalyzes the methylthiolation of an aspartic acid residue of ribosomal protein uS12. The sequence is that of Ribosomal protein uS12 methylthiotransferase RimO from Acinetobacter baumannii (strain AB307-0294).